The chain runs to 192 residues: Imidazoleglycerol-phosphate dehydratase (192 aa).

The protein belongs to the imidazoleglycerol-phosphate dehydratase family.

It is found in the cytoplasm. The enzyme catalyses D-erythro-1-(imidazol-4-yl)glycerol 3-phosphate = 3-(imidazol-4-yl)-2-oxopropyl phosphate + H2O. It participates in amino-acid biosynthesis; L-histidine biosynthesis; L-histidine from 5-phospho-alpha-D-ribose 1-diphosphate: step 6/9. The chain is Imidazoleglycerol-phosphate dehydratase from Staphylococcus aureus (strain bovine RF122 / ET3-1).